Reading from the N-terminus, the 197-residue chain is Phospholipid hydroperoxide glutathione peroxidase (197 aa).

A Phosphoserine modification is found at Ser40. Sec73 is an active-site residue. Residue Sec73 is a non-standard amino acid, selenocysteine. A Phosphoserine modification is found at Val78.

The protein belongs to the glutathione peroxidase family. As to quaternary structure, monomer. Has a tendency to form higher mass oligomers. Interacts with FUNDC1; this interaction promotes GPX4 recruitment into mitochondria through TOM/TIM complex where it is degraded by mitophagy. In terms of tissue distribution, present primarily in testis. Expressed in flagella of epididymal sperm. Isoform Cytoplasmic: Highly expressed in testis. Present in spermatogonia, spermatocyte and spermatid (at protein level).

Its subcellular location is the nucleus. The protein resides in the nucleolus. It localises to the mitochondrion. It is found in the cytoplasm. The catalysed reaction is a hydroperoxy polyunsaturated fatty acid + 2 glutathione = a hydroxy polyunsaturated fatty acid + glutathione disulfide + H2O. It catalyses the reaction 2 glutathione + H2O2 = glutathione disulfide + 2 H2O. It carries out the reaction tert-butyl hydroperoxide + 2 glutathione = tert-butanol + glutathione disulfide + H2O. The enzyme catalyses cumene hydroperoxide + 2 glutathione = 2-phenylpropan-2-ol + glutathione disulfide + H2O. The catalysed reaction is (9S)-hydroperoxy-(10E,12Z)-octadecadienoate + 2 glutathione = (9S)-hydroxy-(10E,12Z)-octadecadienoate + glutathione disulfide + H2O. It catalyses the reaction (13S)-hydroperoxy-(9Z,11E)-octadecadienoate + 2 glutathione = (13S)-hydroxy-(9Z,11E)-octadecadienoate + glutathione disulfide + H2O. It carries out the reaction (5S)-hydroperoxy-(6E,8Z,11Z,14Z)-eicosatetraenoate + 2 glutathione = (5S)-hydroxy-(6E,8Z,11Z,14Z)-eicosatetraenoate + glutathione disulfide + H2O. The enzyme catalyses (12R)-hydroperoxy-(5Z,8Z,10E,14Z)-eicosatetraenoate + 2 glutathione = (12R)-hydroxy-(5Z,8Z,10E,14Z)-eicosatetraenoate + glutathione disulfide + H2O. The catalysed reaction is (12S)-hydroperoxy-(5Z,8Z,10E,14Z)-eicosatetraenoate + 2 glutathione = (12S)-hydroxy-(5Z,8Z,10E,14Z)-eicosatetraenoate + glutathione disulfide + H2O. It catalyses the reaction (15S)-hydroperoxy-(5Z,8Z,11Z,13E)-eicosatetraenoate + 2 glutathione = (15S)-hydroxy-(5Z,8Z,11Z,13E)-eicosatetraenoate + glutathione disulfide + H2O. It carries out the reaction (5S)-hydroperoxy-(6E,8Z,11Z,14Z,17Z)-eicosapentaenoate + 2 glutathione = (5S)-hydroxy-(6E,8Z,11Z,14Z,17Z)-eicosapentaenoate + glutathione disulfide + H2O. The enzyme catalyses (12S)-hydroperoxy-(5Z,8Z,10E,14Z,17Z)-eicosapentaenoate + 2 glutathione = (12S)-hydroxy-(5Z,8Z,10E,14Z,17Z)-eicosapentaenoate + glutathione disulfide + H2O. The catalysed reaction is (15S)-hydroperoxy-(5Z,8Z,11Z,13E,17Z)-eicosapentaenoate + 2 glutathione = (15S)-hydroxy-(5Z,8Z,11Z,13E,17Z)-eicosapentaenoate + glutathione disulfide + H2O. It catalyses the reaction (15S)-hydroperoxy-(11Z,13E)-eicosadienoate + 2 glutathione = (15S)-hydroxy-(11Z,13E)-eicosadienoate + glutathione disulfide + H2O. It carries out the reaction (17S)-hydroperoxy-(4Z,7Z,10Z,13Z,15E,19Z)-docosahexaenoate + 2 glutathione = (17S)-hydroxy-(4Z,7Z,10Z,13Z,15E,19Z)-docosahexaenoate + glutathione disulfide + H2O. The enzyme catalyses a hydroperoxy-1,2-diacyl-glycero-3-phosphocholine + 2 glutathione = a hydroxy-1,2-diacyl-glycero-3-phosphocholine + glutathione disulfide + H2O. Its function is as follows. Essential antioxidant peroxidase that directly reduces phospholipid hydroperoxide even if they are incorporated in membranes and lipoproteins. Can also reduce fatty acid hydroperoxide, cholesterol hydroperoxide and thymine hydroperoxide. Plays a key role in protecting cells from oxidative damage by preventing membrane lipid peroxidation. Required to prevent cells from ferroptosis, a non-apoptotic cell death resulting from an iron-dependent accumulation of lipid reactive oxygen species. The presence of selenocysteine (Sec) versus Cys at the active site is essential for life: it provides resistance to overoxidation and prevents cells against ferroptosis. The presence of Sec at the active site is also essential for the survival of a specific type of parvalbumin-positive interneurons, thereby preventing against fatal epileptic seizures. May be required to protect cells from the toxicity of ingested lipid hydroperoxides. Required for normal sperm development and male fertility. Essential for maturation and survival of photoreceptor cells. Plays a role in a primary T-cell response to viral and parasitic infection by protecting T-cells from ferroptosis and by supporting T-cell expansion. Plays a role of glutathione peroxidase in platelets in the arachidonic acid metabolism. Reduces hydroperoxy ester lipids formed by a 15-lipoxygenase that may play a role as down-regulator of the cellular 15-lipoxygenase pathway. Can also reduce small soluble hydroperoxides such as H2O2, cumene hydroperoxide and tert-butyl hydroperoxide. In terms of biological role, specifically able to suppress the production of leukotriene and prostaglandin in response to several stimuli by reducing fatty acid hydroperoxide. Specifically required to prevent mitochondrial cell death by mediating reduction of cardiolipin hydroperoxide. Also required for normal sperm development and male fertility. Functionally, required for male fertility by stabilizing the condensed chromatin in sperm nuclei. This chain is Phospholipid hydroperoxide glutathione peroxidase, found in Rattus norvegicus (Rat).